A 404-amino-acid chain; its full sequence is Cysteine desulfurase IscS (404 aa).

Pyridoxal 5'-phosphate is bound by residues 75-76, asparagine 155, glutamine 183, and 203-205; these read AT and SAH. N6-(pyridoxal phosphate)lysine is present on lysine 206. Residue threonine 243 participates in pyridoxal 5'-phosphate binding. The active-site Cysteine persulfide intermediate is cysteine 328. Residue cysteine 328 participates in [2Fe-2S] cluster binding.

It belongs to the class-V pyridoxal-phosphate-dependent aminotransferase family. NifS/IscS subfamily. In terms of assembly, homodimer. Forms a heterotetramer with IscU, probably interacts with other sulfur acceptors. Pyridoxal 5'-phosphate serves as cofactor.

The protein resides in the cytoplasm. The catalysed reaction is (sulfur carrier)-H + L-cysteine = (sulfur carrier)-SH + L-alanine. It participates in cofactor biosynthesis; iron-sulfur cluster biosynthesis. Its activity is regulated as follows. Inhibited by equimolar N-iodoacetyl-N'-(5-sulfo-1-naphthyl)ethylenediamine. In terms of biological role, master enzyme that delivers sulfur to a number of partners involved in Fe-S cluster assembly, tRNA modification or cofactor biosynthesis. Catalyzes the removal of elemental sulfur from cysteine to produce alanine via an enzyme-bound persulfide intermediate. Functions as a sulfur delivery protein for Fe-S cluster synthesis. Cluster assembly on IscU homodimers proceeds sequentially from 1 2Fe-2S per dimer, to 2 2Fe-2S per dimer and finally 1 4Fe-4S per dimer. In Azotobacter vinelandii, this protein is Cysteine desulfurase IscS.